We begin with the raw amino-acid sequence, 324 residues long: Delta-aminolevulinic acid dehydratase (324 aa).

3 residues coordinate Zn(2+): Cys118, Cys120, and Cys128. Lys195 serves as the catalytic Schiff-base intermediate with substrate. 5-aminolevulinate contacts are provided by Arg205 and Arg217. Residue Glu233 participates in Mg(2+) binding. Lys248 acts as the Schiff-base intermediate with substrate in catalysis. Ser274 and Tyr313 together coordinate 5-aminolevulinate.

It belongs to the ALAD family. Homooctamer. It depends on Zn(2+) as a cofactor.

The catalysed reaction is 2 5-aminolevulinate = porphobilinogen + 2 H2O + H(+). Its pathway is porphyrin-containing compound metabolism; protoporphyrin-IX biosynthesis; coproporphyrinogen-III from 5-aminolevulinate: step 1/4. In terms of biological role, catalyzes an early step in the biosynthesis of tetrapyrroles. Binds two molecules of 5-aminolevulinate per subunit, each at a distinct site, and catalyzes their condensation to form porphobilinogen. The protein is Delta-aminolevulinic acid dehydratase (hemB) of Staphylococcus epidermidis (strain ATCC 12228 / FDA PCI 1200).